Consider the following 220-residue polypeptide: NADH-quinone oxidoreductase subunit I (220 aa).

4Fe-4S ferredoxin-type domains are found at residues 71-102 and 112-141; these read LQRL…IITH and DSYT…MGNR. Positions 82, 85, 88, 92, 121, 124, 127, and 131 each coordinate [4Fe-4S] cluster. The tract at residues 187–220 is disordered; sequence MQATPLDYVQEPSKEESKEETPTNPESNKGDENV. Basic and acidic residues predominate over residues 198 to 207; the sequence is PSKEESKEET.

It belongs to the complex I 23 kDa subunit family. In terms of assembly, NDH-1 is composed of 14 different subunits. Subunits NuoA, H, J, K, L, M, N constitute the membrane sector of the complex. It depends on [4Fe-4S] cluster as a cofactor.

It localises to the cell inner membrane. It carries out the reaction a quinone + NADH + 5 H(+)(in) = a quinol + NAD(+) + 4 H(+)(out). In terms of biological role, NDH-1 shuttles electrons from NADH, via FMN and iron-sulfur (Fe-S) centers, to quinones in the respiratory chain. The immediate electron acceptor for the enzyme in this species is believed to be ubiquinone. Couples the redox reaction to proton translocation (for every two electrons transferred, four hydrogen ions are translocated across the cytoplasmic membrane), and thus conserves the redox energy in a proton gradient. The protein is NADH-quinone oxidoreductase subunit I of Helicobacter pylori (strain HPAG1).